We begin with the raw amino-acid sequence, 414 residues long: Eukaryotic initiation factor 4A-III-B (414 aa).

Residues 41–69 carry the Q motif motif; sequence PTFDTMGLREDLLRGIYAYGFEKPSAIQQ. ATP is bound by residues lysine 63, glutamine 68, 85–92, and 88–93; these read SQSGTGKT and GTGKTA. Residues 72 to 242 form the Helicase ATP-binding domain; it reads IKQIIKGRDV…NKFMTDPIRI (171 aa). A DEAD box motif is present at residues 190–193; it reads DEAD. A Helicase C-terminal domain is found at 253–414; sequence GIKQFFVAVE…EMPMNVADLI (162 aa). ATP contacts are provided by residues aspartate 345 and 370 to 374; that span reads RSGRY.

This sequence belongs to the DEAD box helicase family. As to quaternary structure, identified in the spliceosome C complex. Part of the mRNA splicing-dependent exon junction complex (EJC) complex; the core complex contains casc3, eif4a3, magoh and rbm8a.

The protein localises to the nucleus. It localises to the nucleus speckle. It is found in the cytoplasm. The catalysed reaction is ATP + H2O = ADP + phosphate + H(+). Functionally, ATP-dependent RNA helicase. Involved in pre-mRNA splicing as component of the spliceosome. Core component of the splicing-dependent multiprotein exon junction complex (EJC) deposited at splice junctions on mRNAs. The EJC is a dynamic structure consisting of core proteins and several peripheral nuclear and cytoplasmic associated factors that join the complex only transiently either during EJC assembly or during subsequent mRNA metabolism. The EJC marks the position of the exon-exon junction in the mature mRNA for the gene expression machinery and the core components remain bound to spliced mRNAs throughout all stages of mRNA metabolism thereby influencing downstream processes including nuclear mRNA export, subcellular mRNA localization, translation efficiency and nonsense-mediated mRNA decay (NMD). Binds spliced mRNA in sequence-independent manner, 20-24 nucleotides upstream of mRNA exon-exon junctions. Involved in craniofacial development. When overexpressed, induces epidermis in dissociated cells that would otherwise adopt a neural fate, a process that requires an active BMP signaling pathway. In Xenopus laevis (African clawed frog), this protein is Eukaryotic initiation factor 4A-III-B (eif4a3-b).